The following is a 1071-amino-acid chain: Carbamoyl phosphate synthase large chain (1071 aa).

A carboxyphosphate synthetic domain region spans residues 1-403 (MPKRTDLKSI…SFQKALRGLE (403 aa)). The ATP-grasp 1 domain occupies 133-328 (KEAMEKIGLS…IAKVAANWAV (196 aa)). Arg-169, Gly-175, Gly-176, Gln-208, Val-210, Glu-215, Gly-241, Val-242, His-243, Gln-285, and Glu-299 together coordinate ATP. Residues Gln-285, Glu-299, and Asn-301 each coordinate Mg(2+). Mn(2+) is bound by residues Gln-285, Glu-299, and Asn-301. Residues 404–548 (TGLCGFNPAR…YSTYEEECES (145 aa)) are oligomerization domain. Residues 549 to 930 (RPSDRKKVMI…AYYKAQLGAG (382 aa)) form a carbamoyl phosphate synthetic domain region. In terms of domain architecture, ATP-grasp 2 spans 673–864 (QKVLNDLGLR…LAKVGARCMA (192 aa)). Residues Arg-709, Phe-748, Leu-750, Glu-755, Gly-780, Ile-781, His-782, Ser-783, Gln-823, and Glu-835 each coordinate ATP. The Mg(2+) site is built by Gln-823, Glu-835, and Asn-837. Positions 823, 835, and 837 each coordinate Mn(2+). Residues 931–1071 (ERLNPTGKIF…ELHGRLKNRN (141 aa)) form the MGS-like domain. An allosteric domain region spans residues 931–1071 (ERLNPTGKIF…ELHGRLKNRN (141 aa)).

The protein belongs to the CarB family. In terms of assembly, composed of two chains; the small (or glutamine) chain promotes the hydrolysis of glutamine to ammonia, which is used by the large (or ammonia) chain to synthesize carbamoyl phosphate. Tetramer of heterodimers (alpha,beta)4. Requires Mg(2+) as cofactor. It depends on Mn(2+) as a cofactor.

The catalysed reaction is hydrogencarbonate + L-glutamine + 2 ATP + H2O = carbamoyl phosphate + L-glutamate + 2 ADP + phosphate + 2 H(+). It catalyses the reaction hydrogencarbonate + NH4(+) + 2 ATP = carbamoyl phosphate + 2 ADP + phosphate + 2 H(+). It participates in amino-acid biosynthesis; L-arginine biosynthesis; carbamoyl phosphate from bicarbonate: step 1/1. Its pathway is pyrimidine metabolism; UMP biosynthesis via de novo pathway; (S)-dihydroorotate from bicarbonate: step 1/3. Functionally, large subunit of the glutamine-dependent carbamoyl phosphate synthetase (CPSase). CPSase catalyzes the formation of carbamoyl phosphate from the ammonia moiety of glutamine, carbonate, and phosphate donated by ATP, constituting the first step of 2 biosynthetic pathways, one leading to arginine and/or urea and the other to pyrimidine nucleotides. The large subunit (synthetase) binds the substrates ammonia (free or transferred from glutamine from the small subunit), hydrogencarbonate and ATP and carries out an ATP-coupled ligase reaction, activating hydrogencarbonate by forming carboxy phosphate which reacts with ammonia to form carbamoyl phosphate. The sequence is that of Carbamoyl phosphate synthase large chain from Neisseria gonorrhoeae.